Consider the following 300-residue polypeptide: Cation-efflux pump FieF (300 aa).

A run of 4 helical transmembrane segments spans residues 12-32 (AAIA…FAWW), 39-59 (ILAA…NLLV), 82-102 (AALA…LTGI), and 114-134 (PGVG…LVSF). Residues Asp45 and Asp49 each coordinate Zn(2+). Residues His153 and Asp157 each contribute to the Zn(2+) site. 2 consecutive transmembrane segments (helical) span residues 156–176 (SDVM…YGWH) and 178–198 (ADAL…LRMG).

This sequence belongs to the cation diffusion facilitator (CDF) transporter (TC 2.A.4) family. FieF subfamily. In terms of assembly, homodimer.

It is found in the cell inner membrane. It catalyses the reaction Zn(2+)(in) + H(+)(out) = Zn(2+)(out) + H(+)(in). The enzyme catalyses Cd(2+)(in) + H(+)(out) = Cd(2+)(out) + H(+)(in). It carries out the reaction Fe(2+)(in) + H(+)(out) = Fe(2+)(out) + H(+)(in). Functionally, divalent metal cation transporter which exports Zn(2+), Cd(2+) and possibly Fe(2+). May be involved in zinc and iron detoxification by efflux. This is Cation-efflux pump FieF from Escherichia coli O157:H7 (strain EC4115 / EHEC).